The chain runs to 1172 residues: Protein diaphanous homolog 3 (1172 aa).

The span at 1–15 shows a compositional bias: basic and acidic residues; that stretch reads MEKHRARALGRDSKA. The segment at 1–36 is disordered; sequence MEKHRARALGRDSKASRRKGLPSAPPAGPYELGEKR. The Nuclear localization signal motif lies at 16–39; that stretch reads SRRKGLPSAPPAGPYELGEKRPKL. The residue at position 47 (Thr47) is a Phosphothreonine. Phosphoserine is present on Ser56. Residues 57-96 form a disordered region; it reads IRIPKGSKKERPPLPQLKTVSGSSDYSSVSSETMENNPKS. Low complexity predominate over residues 77–87; the sequence is SGSSDYSSVSS. A GBD/FH3 domain is found at 94 to 456; it reads PKSLSENEVL…QIVLHRDGID (363 aa). Phosphoserine is present on Ser155. A coiled-coil region spans residues 493 to 530; it reads CKKFEKECTDHQETQAQLQKKEAKINELQAELQAFKSQ. Residues 535 to 586 are disordered; the sequence is PPGTKIPLQTSAKGEPGPSAFPPAPPALGAGVPPPPPPPPPPPPPLPGMAMP. Positions 541-611 constitute an FH1 domain; sequence PLQTSAKGEP…GQNFIPLNLP (71 aa). Over residues 553–581 the composition is skewed to pro residues; sequence SAFPPAPPALGAGVPPPPPPPPPPPPPLP. In terms of domain architecture, FH2 spans 616–1014; that stretch reads PKKEFKPEIS…EKRARIAKER (399 aa). The 31-residue stretch at 1037-1067 folds into the DAD domain; sequence DETGVMDSLLEALQSGAAFRDRRKRTPKLKD. A phosphoserine mark is found at Ser1073 and Ser1158. Residues 1163 to 1172 carry the Nuclear export signal motif; the sequence is EALLARLRAL.

The protein belongs to the formin homology family. Diaphanous subfamily. In terms of processing, ubiquitinated. In terms of tissue distribution, expressed in testis. Present in Sertoli cells (at protein level).

The protein localises to the cytoplasm. It localises to the nucleus. Actin nucleation and elongation factor required for the assembly of F-actin structures, such as actin cables and stress fibers. Required for cytokinesis, stress fiber formation and transcriptional activation of the serum response factor. Binds to GTP-bound form of Rho and to profilin: acts in a Rho-dependent manner to recruit profilin to the membrane, where it promotes actin polymerization. DFR proteins couple Rho and Src tyrosine kinase during signaling and the regulation of actin dynamics. Also acts as an actin nucleation and elongation factor in the nucleus by promoting nuclear actin polymerization inside the nucleus to drive serum-dependent SRF-MRTFA activity. This is Protein diaphanous homolog 3 from Rattus norvegicus (Rat).